The primary structure comprises 626 residues: Glutamate--cysteine ligase (626 aa).

Belongs to the glutamate--cysteine ligase type 3 family. Monomer.

The catalysed reaction is L-cysteine + L-glutamate + ATP = gamma-L-glutamyl-L-cysteine + ADP + phosphate + H(+). The protein operates within sulfur metabolism; glutathione biosynthesis; glutathione from L-cysteine and L-glutamate: step 1/2. An essential enzyme in glutathione (L-gamma-glutamyl-L-cysteinylglycine, GSH) biosynthesis, GSH is essential for growth and differentiation to prespore stage. Catalyzes the condensation of glutamate to cysteine. This Dictyostelium discoideum (Social amoeba) protein is Glutamate--cysteine ligase (gcsA).